Reading from the N-terminus, the 639-residue chain is Kinesin-like protein KIF22 (639 aa).

A Kinesin motor domain is found at Arg18–Ile345. Residue Gly102–Thr109 participates in ATP binding. Positions Ile358–Ser400 are disordered. The segment covering Thr388–Asp397 has biased composition (polar residues). A coiled-coil region spans residues Lys439–Asp484. Positions Gly549–Asn552 match the Important for regulated proteolytic degradation motif.

Belongs to the TRAFAC class myosin-kinesin ATPase superfamily. Kinesin family. In terms of processing, ubiquitinated, leading to its subsequent proteasomal degradation.

It is found in the nucleus. The protein localises to the cytoplasm. It localises to the cytoskeleton. Its function is as follows. Kinesin family member that is involved in spindle formation and the movements of chromosomes during mitosis and meiosis. Binds to microtubules and to DNA. The protein is Kinesin-like protein KIF22 (kif22) of Xenopus tropicalis (Western clawed frog).